Consider the following 256-residue polypeptide: Glucosamine-6-phosphate deaminase (256 aa).

D68 (proton acceptor; for enolization step) is an active-site residue. The active-site For ring-opening step is N137. The Proton acceptor; for ring-opening step role is filled by H139. E144 serves as the catalytic For ring-opening step.

It belongs to the glucosamine/galactosamine-6-phosphate isomerase family. NagB subfamily.

It carries out the reaction alpha-D-glucosamine 6-phosphate + H2O = beta-D-fructose 6-phosphate + NH4(+). The protein operates within amino-sugar metabolism; N-acetylneuraminate degradation; D-fructose 6-phosphate from N-acetylneuraminate: step 5/5. Functionally, catalyzes the reversible isomerization-deamination of glucosamine 6-phosphate (GlcN6P) to form fructose 6-phosphate (Fru6P) and ammonium ion. This is Glucosamine-6-phosphate deaminase from Mycoplasmopsis pulmonis (strain UAB CTIP) (Mycoplasma pulmonis).